The chain runs to 844 residues: DNA mismatch repair protein MutS (844 aa).

An ATP-binding site is contributed by 602–609 (GPNMSGKS).

The protein belongs to the DNA mismatch repair MutS family.

Functionally, this protein is involved in the repair of mismatches in DNA. It is possible that it carries out the mismatch recognition step. This protein has a weak ATPase activity. This Streptococcus pneumoniae (strain Hungary19A-6) protein is DNA mismatch repair protein MutS.